The chain runs to 419 residues: MDKFRVQGPTKLQGEVTISGAKNAALPILFAALLAEEPVEIQNVPKLKDVDTSMKLLSQLGAKVERNGSVHIDARDVNVFCAPYDLVKTMRASIWALGPLVARFGQGQVSLPGGCTIGARPVDLHISGLEQLGATIKLEEGYVKASVDGRLKGAHIVMDKVSVGATVTIMCAATLAEGTTIIENAAREPEIVDTANFLITLGAKISGQGTDRIVIEGVERLGGGVYRVLPDRIETGTFLVAAAISRGKIICRNAQPDTLDAVLAKLRDAGADIEVGEDWISLDMHGKRPKAVNVRTAPHPAFPTDMQAQFTLLNLVAEGTGFITETVFENRFMHVPELSRMGAHAEIESNTVICHGVEKLSGAQVMATDLRASASLVLAGCIAEGTTVVDRIYHIDRGYERIEDKLRALGANIKRVKGE.

Position 22-23 (22-23 (KN)) interacts with phosphoenolpyruvate. Arg91 provides a ligand contact to UDP-N-acetyl-alpha-D-glucosamine. Catalysis depends on Cys115, which acts as the Proton donor. Cys115 carries the post-translational modification 2-(S-cysteinyl)pyruvic acid O-phosphothioketal. Residues 120-124 (RPVDL), 160-163 (KVSV), Asp305, and Val327 contribute to the UDP-N-acetyl-alpha-D-glucosamine site.

Belongs to the EPSP synthase family. MurA subfamily.

It is found in the cytoplasm. It catalyses the reaction phosphoenolpyruvate + UDP-N-acetyl-alpha-D-glucosamine = UDP-N-acetyl-3-O-(1-carboxyvinyl)-alpha-D-glucosamine + phosphate. It functions in the pathway cell wall biogenesis; peptidoglycan biosynthesis. Cell wall formation. Adds enolpyruvyl to UDP-N-acetylglucosamine. The sequence is that of UDP-N-acetylglucosamine 1-carboxyvinyltransferase from Shigella boydii serotype 18 (strain CDC 3083-94 / BS512).